We begin with the raw amino-acid sequence, 339 residues long: Aspartate carbamoyltransferase catalytic subunit (339 aa).

Carbamoyl phosphate contacts are provided by R59 and T60. L-aspartate is bound at residue K87. Residues R109, H142, and Q145 each coordinate carbamoyl phosphate. Residues R182 and R253 each coordinate L-aspartate. Residues G294 and P295 each coordinate carbamoyl phosphate.

The protein belongs to the aspartate/ornithine carbamoyltransferase superfamily. ATCase family. Heterododecamer (2C3:3R2) of six catalytic PyrB chains organized as two trimers (C3), and six regulatory PyrI chains organized as three dimers (R2).

It carries out the reaction carbamoyl phosphate + L-aspartate = N-carbamoyl-L-aspartate + phosphate + H(+). It functions in the pathway pyrimidine metabolism; UMP biosynthesis via de novo pathway; (S)-dihydroorotate from bicarbonate: step 2/3. In terms of biological role, catalyzes the condensation of carbamoyl phosphate and aspartate to form carbamoyl aspartate and inorganic phosphate, the committed step in the de novo pyrimidine nucleotide biosynthesis pathway. The chain is Aspartate carbamoyltransferase catalytic subunit from Prochlorococcus marinus (strain NATL2A).